Here is an 807-residue protein sequence, read N- to C-terminus: Probable phosphoketolase (807 aa).

The protein belongs to the XFP family. Thiamine diphosphate serves as cofactor.

The protein is Probable phosphoketolase of Nitrosospira multiformis (strain ATCC 25196 / NCIMB 11849 / C 71).